We begin with the raw amino-acid sequence, 391 residues long: Processive diacylglycerol beta-glucosyltransferase (391 aa).

Belongs to the glycosyltransferase 28 family. UgtP subfamily.

The protein localises to the cell membrane. It carries out the reaction a 1,2-diacyl-3-O-(beta-D-glucopyranosyl)-sn-glycerol + UDP-alpha-D-glucose = a 1,2-diacyl-3-O-(beta-D-Glc-(1-&gt;6)-beta-D-Glc)-sn-glycerol + UDP + H(+). The enzyme catalyses a 1,2-diacyl-sn-glycerol + UDP-alpha-D-glucose = a 1,2-diacyl-3-O-(beta-D-glucopyranosyl)-sn-glycerol + UDP + H(+). Its pathway is glycolipid metabolism; diglucosyl-diacylglycerol biosynthesis. Its function is as follows. Processive glucosyltransferase involved in the biosynthesis of both the bilayer- and non-bilayer-forming membrane glucolipids. Is able to successively transfer two glucosyl residues to diacylglycerol (DAG), thereby catalyzing the formation of beta-monoglucosyl-DAG (3-O-(beta-D-glucopyranosyl)-1,2-diacyl-sn-glycerol) and beta-diglucosyl-DAG (3-O-(beta-D-glucopyranosyl-beta-(1-&gt;6)-D-glucopyranosyl)-1,2-diacyl-sn-glycerol). Beta-diglucosyl-DAG is the predominant glycolipid found in Bacillales and is also used as a membrane anchor for lipoteichoic acid (LTA). This is Processive diacylglycerol beta-glucosyltransferase from Staphylococcus haemolyticus (strain JCSC1435).